Here is a 254-residue protein sequence, read N- to C-terminus: 3-deoxy-manno-octulosonate cytidylyltransferase (254 aa).

This sequence belongs to the KdsB family.

Its subcellular location is the cytoplasm. It carries out the reaction 3-deoxy-alpha-D-manno-oct-2-ulosonate + CTP = CMP-3-deoxy-beta-D-manno-octulosonate + diphosphate. The protein operates within nucleotide-sugar biosynthesis; CMP-3-deoxy-D-manno-octulosonate biosynthesis; CMP-3-deoxy-D-manno-octulosonate from 3-deoxy-D-manno-octulosonate and CTP: step 1/1. It participates in bacterial outer membrane biogenesis; lipopolysaccharide biosynthesis. Activates KDO (a required 8-carbon sugar) for incorporation into bacterial lipopolysaccharide in Gram-negative bacteria. This Chlamydia abortus (strain DSM 27085 / S26/3) (Chlamydophila abortus) protein is 3-deoxy-manno-octulosonate cytidylyltransferase.